Reading from the N-terminus, the 661-residue chain is Peroxisomal acyl-coenzyme A oxidase 1 (661 aa).

A Phosphoserine modification is found at S26. Residue K65 is modified to N6-acetyllysine. N6-succinyllysine is present on K89. T139 is an FAD binding site. Position 159 is an N6-succinyllysine (K159). G178 lines the FAD pocket. K216 bears the N6-acetyllysine mark. The residue at position 241 (K241) is an N6-succinyllysine. An N6-acetyllysine mark is found at K255, K267, and K272. K349 carries the post-translational modification N6-succinyllysine. E421 acts as the Proton acceptor in catalysis. An N6-acetyllysine; alternate mark is found at K437 and K446. N6-succinyllysine; alternate is present on residues K437 and K446. An N6-acetyllysine modification is found at K500. K512 is modified (N6-acetyllysine; alternate). K512 bears the N6-succinyllysine; alternate mark. K542 is subject to N6-succinyllysine. K637 is modified (N6-acetyllysine; alternate). K637 is subject to N6-succinyllysine; alternate. Residue K643 is modified to N6-succinyllysine. Position 649 is a phosphoserine (S649). The residue at position 652 (K652) is an N6-acetyllysine. An N6-succinyllysine modification is found at K655. The Microbody targeting signal signature appears at 659–661; the sequence is SKL.

Belongs to the acyl-CoA oxidase family. In terms of assembly, homodimer. Interacts with LONP2. FAD serves as cofactor.

It localises to the peroxisome. It catalyses the reaction a 2,3-saturated acyl-CoA + O2 = a (2E)-enoyl-CoA + H2O2. It carries out the reaction hexadecanoyl-CoA + O2 = (2E)-hexadecenoyl-CoA + H2O2. The catalysed reaction is dodecanoyl-CoA + O2 = (2E)-dodecenoyl-CoA + H2O2. The enzyme catalyses octanoyl-CoA + O2 = (2E)-octenoyl-CoA + H2O2. It catalyses the reaction decanoyl-CoA + O2 = (2E)-decenoyl-CoA + H2O2. It carries out the reaction tetradecanoyl-CoA + O2 = (2E)-tetradecenoyl-CoA + H2O2. The catalysed reaction is hexadecanedioyl-CoA + O2 = (2E)-hexadecenedioyl-CoA + H2O2. The enzyme catalyses tetracosanoyl-CoA + O2 = (2E)-tetracosenoyl-CoA + H2O2. It catalyses the reaction glutaryl-CoA + O2 = (2E)-glutaconyl-CoA + H2O2. It carries out the reaction hexanoyl-CoA + O2 = (2E)-hexenoyl-CoA + H2O2. The catalysed reaction is octadecanoyl-CoA + O2 = (2E)-octadecenoyl-CoA + H2O2. The enzyme catalyses (5Z,8Z,11Z,14Z,17Z)-eicosapentaenoyl-CoA + O2 = (2E,5Z,8Z,11Z,14Z,17Z)-icosahexaenoyl-CoA + H2O2. It catalyses the reaction (6Z,9Z,12Z,15Z,18Z,21Z)-tetracosahexaenoyl-CoA + O2 = (2E,6Z,9Z,12Z,15Z,18Z,21Z)-tetracosaheptaenoyl-CoA + H2O2. It participates in lipid metabolism; peroxisomal fatty acid beta-oxidation. In terms of biological role, involved in the initial and rate-limiting step of peroxisomal beta-oxidation of straight-chain saturated and unsaturated very-long-chain fatty acids. Catalyzes the desaturation of fatty acyl-CoAs such as palmitoyl-CoA (hexadecanoyl-CoA) to 2-trans-enoyl-CoAs ((2E)-enoyl-CoAs) such as (2E)-hexadecenoyl-CoA, and donates electrons directly to molecular oxygen (O(2)), thereby producing hydrogen peroxide (H(2)O(2)). The protein is Peroxisomal acyl-coenzyme A oxidase 1 of Cavia porcellus (Guinea pig).